The sequence spans 157 residues: Protein BeeE (157 aa).

It belongs to the phage portal family.

The protein is Protein BeeE (beeE) of Escherichia coli (strain K12).